Reading from the N-terminus, the 115-residue chain is Protein V2 (115 aa).

The protein belongs to the geminiviridae protein AV2/V2 family. Interacts with host SGS3.

It is found in the host cytoplasm. The protein resides in the host perinuclear region. Functionally, through its interaction with host SGS3, acts as a suppressor of RNA-mediated gene silencing, also known as post-transcriptional gene silencing (PTGS), a mechanism of plant viral defense that limits the accumulation of viral RNAs. The polypeptide is Protein V2 (Tomato yellow leaf curl Sardinia virus (isolate Spain-2) (TYLCSV)).